The primary structure comprises 301 residues: Probable alpha-L-glutamate ligase 1 (301 aa).

Positions 104–287 (LQLLSRKGIG…VTEPIVEYIE (184 aa)) constitute an ATP-grasp domain. Residues Lys-141, 178 to 179 (EY), Asp-187, and 211 to 213 (RSN) contribute to the ATP site. 3 residues coordinate Mg(2+): Asp-248, Glu-260, and Asn-262. The Mn(2+) site is built by Asp-248, Glu-260, and Asn-262.

Belongs to the RimK family. It depends on Mg(2+) as a cofactor. Mn(2+) serves as cofactor.

This is Probable alpha-L-glutamate ligase 1 from Shewanella sp. (strain ANA-3).